Here is a 438-residue protein sequence, read N- to C-terminus: MSKNVVIIGTQWGDEGKGKVVDLITDKVASVVRFQGGHNAGHTLVINGKTTILHLIPSGILRNHVECLIGHGVVLSMSALLKEIAELEVADIDTTKRLKISPGCPLILPYHIELDNAREIKRGKAAIGTTGNGIGPAYEDKVARRGLRVSDLLDPNLFASKLKEVMEYHNFFLTHYYNANPVDYQTTLDEVLSQVEQTKHMIVDVTEQIHQHIANDENILFEGAQGALLDIDQGTYPFVTSSNTTSGAAVTGSGIGVTDIDYVLGIVKAYTTRVGGGPFPTELIYDVALDKGDEIGKVLGTVGHEFGATTGRQRRCGWLDMVTLKRSFNLNAVTGICLTKLDVMDTLETIKICTSYEIDGVETTIPPFSAEDYAKAKPIYIKIPGWKTSTIGTDSFDSLPVEAQSYIRKIEQLANLPVDILSTGPDRLQTLILKHPFE.

GTP contacts are provided by residues 13–19 (GDEGKGK) and 41–43 (GHT). Residue D14 is the Proton acceptor of the active site. Residues D14 and G41 each coordinate Mg(2+). IMP contacts are provided by residues 14–17 (DEGK), 39–42 (NAGH), T130, R144, Q225, T240, and R312. Catalysis depends on H42, which acts as the Proton donor. 308 to 314 (ATTGRQR) lines the substrate pocket. GTP contacts are provided by residues R314, 340–342 (KLD), and 422–424 (STG).

It belongs to the adenylosuccinate synthetase family. Homodimer. Mg(2+) is required as a cofactor.

It is found in the cytoplasm. The enzyme catalyses IMP + L-aspartate + GTP = N(6)-(1,2-dicarboxyethyl)-AMP + GDP + phosphate + 2 H(+). It participates in purine metabolism; AMP biosynthesis via de novo pathway; AMP from IMP: step 1/2. Functionally, plays an important role in the de novo pathway of purine nucleotide biosynthesis. Catalyzes the first committed step in the biosynthesis of AMP from IMP. The protein is Adenylosuccinate synthetase of Ruthia magnifica subsp. Calyptogena magnifica.